A 473-amino-acid chain; its full sequence is Chromosomal replication initiator protein DnaA (473 aa).

Positions 1 to 76 are domain I, interacts with DnaA modulators; it reads MNYHSTNVNE…RTVLGRVIGP (76 aa). The interval 76–135 is domain II; that stretch reads PNASLQYNALVDNSSPKYPGTVTLAGCADGGQAAEQFDVNLLHRHMPNAATHSEAQDFDT. The tract at residues 136-353 is domain III, AAA+ region; the sequence is QLNSRLNFRN…GTLVSLITNS (218 aa). 4 residues coordinate ATP: Gly181, Gly183, Lys184, and Thr185. Residues 354–473 form a domain IV, binds dsDNA region; the sequence is VVVGKEIDLT…VERAEQLIAN (120 aa).

This sequence belongs to the DnaA family. In terms of assembly, oligomerizes as a right-handed, spiral filament on DNA at oriC.

The protein localises to the cytoplasm. Plays an essential role in the initiation and regulation of chromosomal replication. ATP-DnaA binds to the origin of replication (oriC) to initiate formation of the DNA replication initiation complex once per cell cycle. Binds the DnaA box (a 9 base pair repeat at the origin) and separates the double-stranded (ds)DNA. Forms a right-handed helical filament on oriC DNA; dsDNA binds to the exterior of the filament while single-stranded (ss)DNA is stabiized in the filament's interior. The ATP-DnaA-oriC complex binds and stabilizes one strand of the AT-rich DNA unwinding element (DUE), permitting loading of DNA polymerase. After initiation quickly degrades to an ADP-DnaA complex that is not apt for DNA replication. Binds acidic phospholipids. The protein is Chromosomal replication initiator protein DnaA of Porphyromonas gingivalis (strain ATCC 33277 / DSM 20709 / CIP 103683 / JCM 12257 / NCTC 11834 / 2561).